The sequence spans 214 residues: Leucyl/phenylalanyl-tRNA--protein transferase (214 aa).

Belongs to the L/F-transferase family.

The protein resides in the cytoplasm. The enzyme catalyses N-terminal L-lysyl-[protein] + L-leucyl-tRNA(Leu) = N-terminal L-leucyl-L-lysyl-[protein] + tRNA(Leu) + H(+). It catalyses the reaction N-terminal L-arginyl-[protein] + L-leucyl-tRNA(Leu) = N-terminal L-leucyl-L-arginyl-[protein] + tRNA(Leu) + H(+). The catalysed reaction is L-phenylalanyl-tRNA(Phe) + an N-terminal L-alpha-aminoacyl-[protein] = an N-terminal L-phenylalanyl-L-alpha-aminoacyl-[protein] + tRNA(Phe). Its function is as follows. Functions in the N-end rule pathway of protein degradation where it conjugates Leu, Phe and, less efficiently, Met from aminoacyl-tRNAs to the N-termini of proteins containing an N-terminal arginine or lysine. The chain is Leucyl/phenylalanyl-tRNA--protein transferase from Cereibacter sphaeroides (strain KD131 / KCTC 12085) (Rhodobacter sphaeroides).